The primary structure comprises 284 residues: SF-assemblin (284 aa).

A disordered region spans residues 1-30 (PTPSPEARVASRPFLDSPLPGSPRSGSPTG). The tract at residues 1-38 (PTPSPEARVASRPFLDSPLPGSPRSGSPTGYITATKAI) is nonhelical region. Residues 17-30 (SPLPGSPRSGSPTG) are compositionally biased toward low complexity. The tract at residues 39 to 284 (SAGKLEHVAE…QDGLRIVNNS (246 aa)) is rod. Coiled-coil stretches lie at residues 56–102 (EIEL…QIQV) and 239–268 (LDEINNLKSAVQMEREERISEDDEIVQAVN).

It belongs to the SF-assemblin family. Consists of at least four isoforms including two phosphorylated.

The protein resides in the cytoplasm. It is found in the cytoskeleton. Functionally, major component of the striated microtubule-associated fibers (SMAFs; system-I-fibers). The sequence is that of SF-assemblin from Spermatozopsis similis (Green alga).